Reading from the N-terminus, the 1108-residue chain is Retinal guanylyl cyclase 2 (1108 aa).

Positions 1–50 (MFLGPWPFSRLLSWFAISSRLSGQHGLTSSKFLRYLCLLALLPLIWWGQA) are cleaved as a signal peptide. Residues 51–465 (LPYKIGVIGP…QGKICQGGID (415 aa)) lie on the Extracellular side of the membrane. A disulfide bridge connects residues Cys-104 and Cys-132. Residues 466–490 (PALAMMVCFALLLALLSINGFAYFI) traverse the membrane as a helical segment. At 491–1108 (RRRINKIQLI…AERQLVRNKP (618 aa)) the chain is on the cytoplasmic side. Residues 532–812 (FQIISEVQSG…DEIFNQFKTF (281 aa)) enclose the Protein kinase domain. The Guanylate cyclase domain occupies 884-1014 (TLYFSDIVGF…DTVNTASRME (131 aa)).

This sequence belongs to the adenylyl cyclase class-4/guanylyl cyclase family. In terms of assembly, homodimer. Interacts with RD3; promotes the exit of GUCY2F from the endoplasmic reticulum and its trafficking to the photoreceptor outer segments. In terms of processing, there are 9 conserved cysteine residues in sensory guanylate cyclases, 6 in the extracellular domain, which may be involved in intra- or interchain disulfide bonds. In terms of tissue distribution, expressed only in the eye.

The protein localises to the membrane. It localises to the photoreceptor outer segment membrane. It catalyses the reaction GTP = 3',5'-cyclic GMP + diphosphate. With respect to regulation, activated by GUCA1B when free calcium ions concentration is low, and inhibited by GUCA1B when free calcium ions concentration is high. Inhibited by RD3. In terms of biological role, responsible for the synthesis of cyclic GMP (cGMP) in rods and cones of photoreceptors. Plays an essential role in phototransduction, by mediating cGMP replenishment. May also participate in the trafficking of membrane-asociated proteins to the photoreceptor outer segment membrane. This Rattus norvegicus (Rat) protein is Retinal guanylyl cyclase 2 (Gucy2f).